We begin with the raw amino-acid sequence, 526 residues long: MGSSKSKPKDPSQRRCSLEPPDSTHHGGFPASQTPNKTAAPDTHRTPSRSFGTVATEPKLFGGFNTSDTVTSPQRAGALAGGVTTFVALYDYESRTETDLSFKKGERLQIVNNTEGDWWLAHSLTTGQTGYIPSNYVAPSDSIQAEEWYFGKITRRESERLLLNPENPRGTFLVRESETTKGAYCLSVSDFDNAKGLNVKHYKIRKLDSGGFYITSRTQFSSLQQLVAYYSKHADGLCHRLTNVCPTSKPQTQGLAKDAWEIPRESLRLEVKLGQGCFGEVWMGTWNGTTRVAIKTLKPGTMSPEAFLQEAQVMKKLRHEKLVQLYAVVSEEPIYIVTEYMSKGSLLDFLKGEMGKYLRLPQLVDMAAQIASGMAYVERMNYVHRDLRAANILVGENLVCKVADFGLARLIEDNEYTARQGAKFPIKWTAPEAALYGRFTIKSDVWSFGILLTELTTKGRVPYPGMGNGEVLDRVERGYRMPCPPECPESLHDLMCQCWRRDPEERPTFEYLQAQLLPACVLEVAE.

A disordered region spans residues 1–57 (MGSSKSKPKDPSQRRCSLEPPDSTHHGGFPASQTPNKTAAPDTHRTPSRSFGTVATE). Gly-2 carries N-myristoyl glycine; by host lipidation. Over residues 7 to 25 (KPKDPSQRRCSLEPPDSTH) the composition is skewed to basic and acidic residues. The SH3 domain maps to 81–142 (GGVTTFVALY…PSNYVAPSDS (62 aa)). The SH2 domain occupies 148-245 (WYFGKITRRE…GLCHRLTNVC (98 aa)). In terms of domain architecture, Protein kinase spans 267–517 (LRLEVKLGQG…TFEYLQAQLL (251 aa)). Residues 273–281 (LGQGCFGEV) and Lys-295 contribute to the ATP site. The Proton acceptor role is filled by Asp-386. Tyr-416 bears the Phosphotyrosine; by autocatalysis mark.

Belongs to the protein kinase superfamily. Tyr protein kinase family. SRC subfamily. The phosphorylated form is termed pp60v-src.

It catalyses the reaction L-tyrosyl-[protein] + ATP = O-phospho-L-tyrosyl-[protein] + ADP + H(+). In terms of biological role, this phosphoprotein, required for both the initiation and the maintenance of neoplastic transformation, is a protein kinase that catalyzes the phosphorylation of tyrosine residues in vitro. The chain is Tyrosine-protein kinase transforming protein Src (V-SRC) from Galliformes.